A 131-amino-acid chain; its full sequence is Large ribosomal subunit protein bL17 (131 aa).

This sequence belongs to the bacterial ribosomal protein bL17 family. In terms of assembly, part of the 50S ribosomal subunit. Contacts protein L32.

This chain is Large ribosomal subunit protein bL17, found in Methylobacillus flagellatus (strain ATCC 51484 / DSM 6875 / VKM B-1610 / KT).